Here is a 267-residue protein sequence, read N- to C-terminus: Phosphatidylglycerol--prolipoprotein diacylglyceryl transferase (267 aa).

Transmembrane regions (helical) follow at residues 18–38, 57–77, and 95–115; these read LSVRWYGLMYLIGFAFAMWFA, FLFYGMLGVILGGRIGYVLFY, and GGMSFHGGTLGVITAVVIFAW. R140 provides a ligand contact to a 1,2-diacyl-sn-glycero-3-phospho-(1'-sn-glycerol). The next 3 membrane-spanning stretches (helical) occupy residues 173–193, 200–220, and 233–253; these read SQLYEAFFEGLVLFLILQWFI, GSVAGVFLLGYGTFRFCIEYF, and FISMGQILSLPMIVGGLGLLI.

The protein belongs to the Lgt family.

The protein resides in the cell inner membrane. It carries out the reaction L-cysteinyl-[prolipoprotein] + a 1,2-diacyl-sn-glycero-3-phospho-(1'-sn-glycerol) = an S-1,2-diacyl-sn-glyceryl-L-cysteinyl-[prolipoprotein] + sn-glycerol 1-phosphate + H(+). It functions in the pathway protein modification; lipoprotein biosynthesis (diacylglyceryl transfer). Its function is as follows. Catalyzes the transfer of the diacylglyceryl group from phosphatidylglycerol to the sulfhydryl group of the N-terminal cysteine of a prolipoprotein, the first step in the formation of mature lipoproteins. The polypeptide is Phosphatidylglycerol--prolipoprotein diacylglyceryl transferase (Pseudoalteromonas translucida (strain TAC 125)).